The following is a 192-amino-acid chain: Phosphoheptose isomerase (192 aa).

Residues L35–N192 form the SIS domain. N50–G52 contributes to the substrate binding site. Zn(2+)-binding residues include H59 and E63. Substrate is bound by residues E63, N92–D93, S118–S120, S123, and Q170. Positions 170 and 178 each coordinate Zn(2+).

Belongs to the SIS family. GmhA subfamily. In terms of assembly, homotetramer. Zn(2+) is required as a cofactor.

The protein localises to the cytoplasm. The catalysed reaction is 2 D-sedoheptulose 7-phosphate = D-glycero-alpha-D-manno-heptose 7-phosphate + D-glycero-beta-D-manno-heptose 7-phosphate. It participates in carbohydrate biosynthesis; D-glycero-D-manno-heptose 7-phosphate biosynthesis; D-glycero-alpha-D-manno-heptose 7-phosphate and D-glycero-beta-D-manno-heptose 7-phosphate from sedoheptulose 7-phosphate: step 1/1. Functionally, catalyzes the isomerization of sedoheptulose 7-phosphate in D-glycero-D-manno-heptose 7-phosphate. This Helicobacter pylori (strain HPAG1) protein is Phosphoheptose isomerase.